A 329-amino-acid polypeptide reads, in one-letter code: Lipoyl synthase (329 aa).

The disordered stretch occupies residues 1-23 (MTDLTATPAPAEPAASAYDPTAK). Cys76, Cys81, Cys87, Cys102, Cys106, Cys109, and Ser316 together coordinate [4Fe-4S] cluster. The region spanning 87–305 (CFGKGTATFM…EEEAYKMGFT (219 aa)) is the Radical SAM core domain.

This sequence belongs to the radical SAM superfamily. Lipoyl synthase family. It depends on [4Fe-4S] cluster as a cofactor.

Its subcellular location is the cytoplasm. The catalysed reaction is [[Fe-S] cluster scaffold protein carrying a second [4Fe-4S](2+) cluster] + N(6)-octanoyl-L-lysyl-[protein] + 2 oxidized [2Fe-2S]-[ferredoxin] + 2 S-adenosyl-L-methionine + 4 H(+) = [[Fe-S] cluster scaffold protein] + N(6)-[(R)-dihydrolipoyl]-L-lysyl-[protein] + 4 Fe(3+) + 2 hydrogen sulfide + 2 5'-deoxyadenosine + 2 L-methionine + 2 reduced [2Fe-2S]-[ferredoxin]. It functions in the pathway protein modification; protein lipoylation via endogenous pathway; protein N(6)-(lipoyl)lysine from octanoyl-[acyl-carrier-protein]: step 2/2. Functionally, catalyzes the radical-mediated insertion of two sulfur atoms into the C-6 and C-8 positions of the octanoyl moiety bound to the lipoyl domains of lipoate-dependent enzymes, thereby converting the octanoylated domains into lipoylated derivatives. The chain is Lipoyl synthase from Burkholderia pseudomallei (strain 1106a).